A 591-amino-acid polypeptide reads, in one-letter code: Probable auxin efflux carrier component 3b (591 aa).

Over 1-6 (MISWHE) the chain is Extracellular. A helical membrane pass occupies residues 7 to 27 (LYMVLSAVVPLYVAMMVAYGS). Residues 28-38 (VRWWGVLTPEQ) are Cytoplasmic-facing. The chain crosses the membrane as a helical span at residues 39 to 59 (CSGINRFVAVIAVPLLSFHFI). Position 51 (V51) interacts with (indol-3-yl)acetate. Residues 60-70 (SSSDPYAMNLR) lie on the Extracellular side of the membrane. The helical transmembrane segment at 71–93 (FVAADTLQKVLVLAALAAWSRFP) threads the bilayer. Residues 94–107 (ARFVPPAWPPLDCS) are Cytoplasmic-facing. The chain crosses the membrane as a helical span at residues 108 to 128 (ITLFSVSTLPNTLVMGIPLLV). (indol-3-yl)acetate is bound by residues N118 and L120. At 129-137 (SMYGPYSGD) the chain is on the extracellular side. A helical membrane pass occupies residues 138-158 (LMVQIVVLQSIVWYTLLLFLF). Y151 is a (indol-3-yl)acetate binding site. Residues 159–450 (EFRAARVLIA…LIRNPNTYAS (292 aa)) are Cytoplasmic-facing. 2 stretches are compositionally biased toward polar residues: residues 243 to 254 (SRNATPRGSTFT) and 283 to 292 (SSSRQHTPRP). Disordered stretches follow at residues 243–269 (SRNA…SALR), 283–313 (SSSR…APTN), 344–374 (ETRR…GERA), and 392–420 (AGAK…RARG). The span at 395-407 (KTEQQTTAVTTTT) shows a compositional bias: low complexity. The chain crosses the membrane as a helical span at residues 451 to 471 (LIGLTWSLIAFRFHITMPIIV). The Extracellular portion of the chain corresponds to 472-474 (AKS). A helical membrane pass occupies residues 475–495 (ISILSDAGLGMAMFSLGLFMA). The Cytoplasmic segment spans residues 496-511 (TQPKIIACGYSVAAAS). A helical membrane pass occupies residues 512–532 (MGVRFFFGPAIMAAASAAVGI). The Extracellular segment spans residues 533-535 (RGT). Residues 536–556 (LLRIAIVQAALPQGIVPFVFA) form a helical membrane-spanning segment. Residues I550 and V551 each coordinate (indol-3-yl)acetate. Topologically, residues 557–568 (KEYNLHATILCT) are cytoplasmic. A helical transmembrane segment spans residues 569 to 589 (LVIFGMLIALPITLVYYIILG). Over 590–591 (LL) the chain is Extracellular.

It belongs to the auxin efflux carrier (TC 2.A.69.1) family. Homodimer. As to expression, expressed in stem bases and leaves.

The protein localises to the membrane. In terms of biological role, may act as a component of the auxin efflux carrier. This is Probable auxin efflux carrier component 3b from Oryza sativa subsp. japonica (Rice).